The primary structure comprises 128 residues: Azurin (128 aa).

One can recognise a Plastocyanin-like domain in the interval 1–128 (AECSVDIQGN…ALMKGTLTLK (128 aa)). Cys-3 and Cys-26 are joined by a disulfide. Positions 46, 112, 117, and 121 each coordinate Cu cation.

The protein localises to the periplasm. In terms of biological role, transfers electrons from cytochrome c551 to cytochrome oxidase. The sequence is that of Azurin from Pseudomonas aeruginosa.